The primary structure comprises 325 residues: Pyruvate dehydrogenase E1 component subunit beta (325 aa).

Thiamine diphosphate is bound at residue glutamate 60.

As to quaternary structure, heterodimer of an alpha and a beta chain. The cofactor is thiamine diphosphate.

Its subcellular location is the cytoplasm. The protein localises to the secreted. The enzyme catalyses N(6)-[(R)-lipoyl]-L-lysyl-[protein] + pyruvate + H(+) = N(6)-[(R)-S(8)-acetyldihydrolipoyl]-L-lysyl-[protein] + CO2. With respect to regulation, activity of the E1 module is inhibited by the pyruvate dehydrogenase inhibitor PdhI. Functionally, the pyruvate dehydrogenase complex catalyzes the overall conversion of pyruvate to acetyl-CoA and CO(2). It contains multiple copies of three enzymatic components: pyruvate dehydrogenase (E1), dihydrolipoamide acetyltransferase (E2) and lipoamide dehydrogenase (E3). The B.subtilis PDH complex also possesses branched-chain 2-oxoacid dehydrogenase (BCDH) activity. This Bacillus subtilis (strain 168) protein is Pyruvate dehydrogenase E1 component subunit beta.